A 246-amino-acid chain; its full sequence is Uridylate kinase (246 aa).

16–19 provides a ligand contact to ATP; the sequence is KFSG. UMP is bound at residue Gly-58. ATP contacts are provided by Gly-59 and Arg-63. Residues Asp-78 and 139–146 contribute to the UMP site; that span reads TGNPFFTT. 3 residues coordinate ATP: Thr-166, Tyr-172, and Asp-175.

It belongs to the UMP kinase family. As to quaternary structure, homohexamer.

Its subcellular location is the cytoplasm. The enzyme catalyses UMP + ATP = UDP + ADP. The protein operates within pyrimidine metabolism; CTP biosynthesis via de novo pathway; UDP from UMP (UMPK route): step 1/1. Its activity is regulated as follows. Inhibited by UTP. Catalyzes the reversible phosphorylation of UMP to UDP. This is Uridylate kinase from Legionella pneumophila (strain Corby).